We begin with the raw amino-acid sequence, 129 residues long: NADPH-dependent 7-cyano-7-deazaguanine reductase (129 aa).

Cysteine 34 serves as the catalytic Thioimide intermediate. Aspartate 41 acts as the Proton donor in catalysis. Residues 56 to 58 (VEL) and 75 to 76 (HE) each bind substrate.

It belongs to the GTP cyclohydrolase I family. QueF type 1 subfamily.

Its subcellular location is the cytoplasm. The enzyme catalyses 7-aminomethyl-7-carbaguanine + 2 NADP(+) = 7-cyano-7-deazaguanine + 2 NADPH + 3 H(+). It participates in tRNA modification; tRNA-queuosine biosynthesis. Catalyzes the NADPH-dependent reduction of 7-cyano-7-deazaguanine (preQ0) to 7-aminomethyl-7-deazaguanine (preQ1). The chain is NADPH-dependent 7-cyano-7-deazaguanine reductase from Thioalkalivibrio sulfidiphilus (strain HL-EbGR7).